A 524-amino-acid polypeptide reads, in one-letter code: Metalloendopeptidase OMA1, mitochondrial (524 aa).

Residues 1–13 constitute a mitochondrion transit peptide; that stretch reads MSFICGLQSAARN. Positions 14–143 are excised as a propeptide; that stretch reads HVFFRFNSLS…RNFHTSPRFQ (130 aa). Residues 144–195 lie on the Mitochondrial matrix side of the membrane; sequence AAPVPLLLMILKPVQKLFAIIVGRGIRKWWQALPPNKKEVVKENIRKNKWKL. The interval 148–167 is cardiolipin-binding; sequence PLLLMILKPVQKLFAIIVGR. The stress-sensor region stretch occupies residues 165–195; the sequence is VGRGIRKWWQALPPNKKEVVKENIRKNKWKL. Residues 196–216 traverse the membrane as a helical segment; the sequence is FLGLSSFGLLFVVFYFTHLEV. His327 contacts Zn(2+). Glu328 is a catalytic residue. Residues His331 and Glu392 each contribute to the Zn(2+) site. A disulfide bridge links Cys407 with Cys465.

It belongs to the peptidase M48 family. In terms of assembly, homooligomer. Zn(2+) is required as a cofactor. May form a redox-dependent disulfide bond. Exists in a semi-oxidized state and is activated by prolonged hypoxia. In terms of processing, autocatalytically cleaved in response to mitochondrial depolarization both at the N-terminus and C-terminus to generate the short active form (S-OMA1). Autocatalytic processing at the C-terminus takes place at residues 447-456. The S-OMA1 form is unstable. OMA1 pre-processing by AFG3L2 may participate in maturation before OMA1 autocatalytic cleavage. Degraded by YMEL1 in response to membrane depolarization. Protein turnover is regulated by prohibitin (PHB and PHB2), which promotes degradation of OMA1 in a cardiolipin-binding manner. As to expression, widely expressed, with strong expression in the heart, skeletal muscle, kidney and liver.

Its subcellular location is the mitochondrion inner membrane. Protease activity is activated upon autocatalytic cleavage in response to mitochondrial depolarization. In terms of biological role, metalloprotease that is part of the quality control system in the inner membrane of mitochondria. Activated in response to various mitochondrial stress, leading to the proteolytic cleavage of target proteins, such as OPA1, UQCC3 and DELE1. Involved in the fusion of the mitochondrial inner membranes by mediating cleavage of OPA1 at S1 position, generating the soluble OPA1 (S-OPA1), which cooperates with the membrane form (L-OPA1) to coordinate the fusion of mitochondrial inner membranes. Following stress conditions that induce loss of mitochondrial membrane potential, mediates cleavage of OPA1, leading to excess production of soluble OPA1 (S-OPA1) and negative regulation of mitochondrial fusion. Involved in mitochondrial safeguard in response to transient mitochondrial membrane depolarization (flickering) by catalyzing cleavage of OPA1, leading to excess production of S-OPA1, preventing mitochondrial hyperfusion. Also acts as a regulator of apoptosis: upon BAK and BAX aggregation, mediates cleavage of OPA1, leading to the remodeling of mitochondrial cristae and allowing the release of cytochrome c from mitochondrial cristae. In depolarized mitochondria, may also act as a backup protease for PINK1 by mediating PINK1 cleavage and promoting its subsequent degradation by the proteasome. May also cleave UQCC3 in response to mitochondrial depolarization. Also acts as an activator of the integrated stress response (ISR): in response to mitochondrial stress, mediates cleavage of DELE1 to generate the processed form of DELE1 (S-DELE1), which translocates to the cytosol and activates EIF2AK1/HRI to trigger the ISR. Its role in mitochondrial quality control is essential for regulating lipid metabolism as well as to maintain body temperature and energy expenditure under cold-stress conditions. Binds cardiolipin, possibly regulating its protein turnover. Required for the stability of the respiratory supercomplexes. This Homo sapiens (Human) protein is Metalloendopeptidase OMA1, mitochondrial.